A 60-amino-acid polypeptide reads, in one-letter code: MAVQQNKKSPSKRGMHRSHDFLVNPATAIEPNTGETHLRHHISPNGFYRGRKVLKTKADE.

Positions 1-60 (MAVQQNKKSPSKRGMHRSHDFLVNPATAIEPNTGETHLRHHISPNGFYRGRKVLKTKADE) are disordered. Positions 49–60 (RGRKVLKTKADE) are enriched in basic residues.

The protein belongs to the bacterial ribosomal protein bL32 family.

This Bordetella bronchiseptica (strain ATCC BAA-588 / NCTC 13252 / RB50) (Alcaligenes bronchisepticus) protein is Large ribosomal subunit protein bL32.